Consider the following 299-residue polypeptide: Oxygen-dependent coproporphyrinogen-III oxidase (299 aa).

Position 92 (Ser92) interacts with substrate. Residues His96 and His106 each coordinate Mn(2+). His106 acts as the Proton donor in catalysis. A substrate-binding site is contributed by 108 to 110 (NVR). Positions 145 and 175 each coordinate Mn(2+). An important for dimerization region spans residues 240–275 (YVEFNLVWDRGTLFGLQTGGRTESILMSMPPLVRWE). 258–260 (GGR) is a binding site for substrate.

It belongs to the aerobic coproporphyrinogen-III oxidase family. In terms of assembly, homodimer. Mn(2+) serves as cofactor.

The protein localises to the cytoplasm. The enzyme catalyses coproporphyrinogen III + O2 + 2 H(+) = protoporphyrinogen IX + 2 CO2 + 2 H2O. It functions in the pathway porphyrin-containing compound metabolism; protoporphyrin-IX biosynthesis; protoporphyrinogen-IX from coproporphyrinogen-III (O2 route): step 1/1. Involved in the heme biosynthesis. Catalyzes the aerobic oxidative decarboxylation of propionate groups of rings A and B of coproporphyrinogen-III to yield the vinyl groups in protoporphyrinogen-IX. The sequence is that of Oxygen-dependent coproporphyrinogen-III oxidase from Escherichia coli O8 (strain IAI1).